The chain runs to 327 residues: Deaminated glutathione amidase (327 aa).

A mitochondrion-targeting transit peptide spans 1-13 (MLGFITRPPHRFL). One can recognise a CN hydrolase domain in the interval 46 to 298 (LPLVAVCQVT…PGLCLARIDL (253 aa)). Glu86 serves as the catalytic Proton acceptor. Lys161 functions as the Proton donor in the catalytic mechanism. Cys203 (nucleophile) is an active-site residue.

This sequence belongs to the carbon-nitrogen hydrolase superfamily. NIT1/NIT2 family. In terms of tissue distribution, detected in heart, brain, placenta, liver, skeletal muscle, kidney and pancreas.

The protein localises to the mitochondrion. Its subcellular location is the cytoplasm. The enzyme catalyses N-(4-oxoglutaryl)-L-cysteinylglycine + H2O = L-cysteinylglycine + 2-oxoglutarate. Catalyzes the hydrolysis of the amide bond in N-(4-oxoglutarate)-L-cysteinylglycine (deaminated glutathione), a metabolite repair reaction to dispose of the harmful deaminated glutathione. Plays a role in cell growth and apoptosis: loss of expression promotes cell growth, resistance to DNA damage stress and increased incidence to NMBA-induced tumors. Has tumor suppressor properties that enhances the apoptotic responsiveness in cancer cells; this effect is additive to the tumor suppressor activity of FHIT. It is also a negative regulator of primary T-cells. This chain is Deaminated glutathione amidase (NIT1), found in Homo sapiens (Human).